The chain runs to 745 residues: Aminopeptidase NAALADL1 (745 aa).

The Cytoplasmic portion of the chain corresponds to 1–6 (MHWAKI). Residues 7–28 (LGVGIGAAALLGLGIILGHFAI) traverse the membrane as a helical; Signal-anchor for type II membrane protein segment. Over 29–745 (PKATEPLASS…AATLQPVTDL (717 aa)) the chain is Extracellular. Residues asparagine 128, asparagine 141, and asparagine 235 are each glycosylated (N-linked (GlcNAc...) asparagine). Residues threonine 263 and leucine 266 each coordinate Ca(2+). Residues asparagine 279, asparagine 304, and asparagine 350 are each glycosylated (N-linked (GlcNAc...) asparagine). An intrachain disulfide couples cysteine 301 to cysteine 318. Zn(2+) contacts are provided by histidine 373 and aspartate 383. The active-site Proton donor/acceptor is glutamate 421. Residue glutamate 422 coordinates Zn(2+). Residues glutamate 430 and glutamate 433 each coordinate Ca(2+). Residue aspartate 450 participates in Zn(2+) binding. Residues asparagine 456 and asparagine 497 are each glycosylated (N-linked (GlcNAc...) asparagine). A Zn(2+)-binding site is contributed by histidine 550. Residues asparagine 593 and asparagine 620 are each glycosylated (N-linked (GlcNAc...) asparagine).

The protein belongs to the peptidase M28 family. M28B subfamily. In terms of assembly, homodimer. It depends on Zn(2+) as a cofactor. Post-translationally, N-glycosylated. As to expression, detected on apical villi on the brush border membrane of ileum enterocytes (at protein level). Mainly expressed in the distal small intestine.

The protein resides in the apical cell membrane. In terms of biological role, aminopeptidase with broad substrate specificity. Has lower activity with substrates that have Asp or Glu in the P2' position, or Pro in the P3' position. Lacks activity with substrates that have both Pro in the P3' position and Asp or Glu in the P2' position. Lacks carboxypeptidase activity. Lacks dipeptidyl-peptidase IV type activity. In Rattus norvegicus (Rat), this protein is Aminopeptidase NAALADL1 (Naaladl1).